Reading from the N-terminus, the 474-residue chain is tRNA-2-methylthio-N(6)-dimethylallyladenosine synthase (474 aa).

Residues 3–120 (KKLHIKTWGC…LPEMIEQVRR (118 aa)) enclose the MTTase N-terminal domain. [4Fe-4S] cluster-binding residues include Cys12, Cys49, Cys83, Cys157, Cys161, and Cys164. Residues 143–375 (RAEGPTAFVS…QDRITQQAMR (233 aa)) enclose the Radical SAM core domain. The TRAM domain occupies 378-441 (RHMMGTVQRI…TNSLRGVFIR (64 aa)).

Belongs to the methylthiotransferase family. MiaB subfamily. Monomer. It depends on [4Fe-4S] cluster as a cofactor.

Its subcellular location is the cytoplasm. The catalysed reaction is N(6)-dimethylallyladenosine(37) in tRNA + (sulfur carrier)-SH + AH2 + 2 S-adenosyl-L-methionine = 2-methylsulfanyl-N(6)-dimethylallyladenosine(37) in tRNA + (sulfur carrier)-H + 5'-deoxyadenosine + L-methionine + A + S-adenosyl-L-homocysteine + 2 H(+). In terms of biological role, catalyzes the methylthiolation of N6-(dimethylallyl)adenosine (i(6)A), leading to the formation of 2-methylthio-N6-(dimethylallyl)adenosine (ms(2)i(6)A) at position 37 in tRNAs that read codons beginning with uridine. This is tRNA-2-methylthio-N(6)-dimethylallyladenosine synthase from Shewanella baltica (strain OS185).